A 789-amino-acid polypeptide reads, in one-letter code: Disintegrin and metalloproteinase domain-containing protein 7 (789 aa).

Residues 1–25 (MFPTGIFLMSVLISQMQGRGIVGVE) form the signal peptide. Residues 26–176 (GQELVHPKKL…NYSCEGLNFT (151 aa)) constitute a propeptide that is removed on maturation. N84, N167, and N174 each carry an N-linked (GlcNAc...) asparagine glycan. The Extracellular portion of the chain corresponds to 177 to 668 (KKSTLIDAKI…WGEALNLTSV (492 aa)). Residues 199–393 (KFIELFVVAD…QKPACILNNP (195 aa)) form the Peptidase M12B domain. 4 disulfide bridges follow: C310/C388, C350/C372, C352/C357, and C459/C479. In terms of domain architecture, Disintegrin spans 401-487 (YPFCGNKKVD…ECPKDESQAN (87 aa)). N-linked (GlcNAc...) asparagine glycosylation is found at N583, N628, and N664. A helical membrane pass occupies residues 669-689 (SIMVVVLVMVIIGVGLVILLI). Over 690–789 (RYQKCIKMKQ…DSQSDCTRLG (100 aa)) the chain is Cytoplasmic. Over residues 762 to 771 (DPRGIADPKQ) the composition is skewed to basic and acidic residues. A disordered region spans residues 762–789 (DPRGIADPKQNDNMNLNLDSQSDCTRLG). The segment covering 772–789 (NDNMNLNLDSQSDCTRLG) has biased composition (polar residues).

Interacts with ITM2B in sperm; the interaction increases following capacitation. Interacts with HSPA5 and CANX. In terms of tissue distribution, expressed specifically in the caput region of the epididymis (at protein level).

It localises to the membrane. Required for normal male fertility via maintenance of epithelial cell morphology in the caput epididymis and subsequently correct epididymis lumen structure required for sperm development. Plays a role in sperm motility, flagella morphology and tyrosine phosphorylation during sperm capacitance. Plays a role in normal expression levels of HSPA5, ITM2B and ADAM2 in sperm both prior to and post-capacitation. This is a non catalytic metalloprotease-like protein. The sequence is that of Disintegrin and metalloproteinase domain-containing protein 7 from Rattus norvegicus (Rat).